The primary structure comprises 759 residues: Olfactomedin-like protein 2B (759 aa).

Positions Met1–Gly20 are cleaved as a signal peptide. Coiled coils occupy residues Thr40 to Ala68 and Lys179 to Arg209. N-linked (GlcNAc...) asparagine glycans are attached at residues Asn187 and Asn213. Disordered stretches follow at residues Thr346–Ser396 and Thr456–Asp494. Low complexity predominate over residues Ala356–Ser396. Residues Arg502–Tyr759 enclose the Olfactomedin-like domain. A disulfide bridge links Cys503 with Cys689. An N-linked (GlcNAc...) asparagine glycan is attached at Asn704.

As to quaternary structure, homodimer. Binds to heparin and chondroitin sulfate E. Post-translationally, O-glycosylated and N-glycosylated.

It localises to the secreted. This is Olfactomedin-like protein 2B (OLFML2B) from Bos taurus (Bovine).